Consider the following 230-residue polypeptide: Sugar fermentation stimulation protein homolog (230 aa).

It belongs to the SfsA family.

This is Sugar fermentation stimulation protein homolog from Clostridium kluyveri (strain NBRC 12016).